Here is a 391-residue protein sequence, read N- to C-terminus: PPE family protein PPE15 (391 aa).

The tract at residues 312-367 (LGEATLVGRLSVPAAWSTAAPATTAGATALEGSGWTVAAEEAGPVTGMMPGMASAA) is eukaryotic-like SH3 domain.

It belongs to the mycobacterial PPE family. Forms a heterodimer with PE8. The dimer forms a 1:1:1 heterotrimeric complex with EspG5. PPE15 interacts directly with EspG5. Interacts via the C-terminal region with host Toll-like receptor 4 (TLR4). Interacts, also via the C-terminal region, with two cytosolic subunits of the host NOX complex, p47phox (NCF1) and p67phox (NCF2).

The protein localises to the secreted. Its subcellular location is the host mitochondrion. In terms of biological role, may play a critical role in the homeostasis of triacylglycerol-containing lipid droplets in M.tuberculosis and influence the entry of the pathogen into a dormant state. Is recognized by host TLR4 receptor at the macrophage cell surface, which modulates the host immune response, induces mitochondrial stress and perturbations, and induces macrophage apoptosis leading to pathogen persistence. Also downregulates NOX-mediated reactive oxygen species (ROS) generation in THP1 macrophages, which increases intracellular survival of bacteria. PPE15 interacts with two subunits of the host NADPH oxidase (NOX) complex in the cytosol of macrophages and prevents their migration to the membrane, which inhibits the assembly of the NOX complex at the plasma membrane of THP1 macrophages. This leads to reduced NOX activity and diminished ROS generation. The protein is PPE family protein PPE15 (PPE15) of Mycobacterium tuberculosis (strain CDC 1551 / Oshkosh).